Here is a 205-residue protein sequence, read N- to C-terminus: Recombination protein RecR (205 aa).

Residues 64-79 (CSRCYFITQNDLCAIC) form a C4-type zinc finger. The Toprim domain occupies 87–182 (RIVCVVEEPL…RVTRLARGLP (96 aa)).

This sequence belongs to the RecR family.

Its function is as follows. May play a role in DNA repair. It seems to be involved in an RecBC-independent recombinational process of DNA repair. It may act with RecF and RecO. The chain is Recombination protein RecR from Roseiflexus castenholzii (strain DSM 13941 / HLO8).